The primary structure comprises 68 residues: Neuronal regeneration-related protein (68 aa).

Interacts with FLNA. Interacts with the latency-associated peptides (LAP) of TGFB1 and TGFB2; the interaction results in a decrease in TGFB autoinduction. In terms of processing, phosphorylated on Ser-59. Phosphorylation decreases stability and activity.

The protein localises to the cytoplasm. May have roles in neural function. Ectopic expression promotes axonal regeneration. Also augments motility of gliomas. May also have roles in cellular differentiation. Induces differentiation of fibroblast into myofibroblast and myofibroblast ameboid migration. Increases retinoic-acid regulation of lipid-droplet biogenesis. Down-regulates the expression of TGFB1 and TGFB2 but not of TGFB3. May play a role in the regulation of alveolar generation. This chain is Neuronal regeneration-related protein (Nrep), found in Rattus norvegicus (Rat).